The chain runs to 321 residues: GTP cyclohydrolase FolE2 (321 aa).

Belongs to the GTP cyclohydrolase IV family.

It catalyses the reaction GTP + H2O = 7,8-dihydroneopterin 3'-triphosphate + formate + H(+). It functions in the pathway cofactor biosynthesis; 7,8-dihydroneopterin triphosphate biosynthesis; 7,8-dihydroneopterin triphosphate from GTP: step 1/1. Its function is as follows. Converts GTP to 7,8-dihydroneopterin triphosphate. This is GTP cyclohydrolase FolE2 from Paracoccus denitrificans (strain Pd 1222).